The following is a 186-amino-acid chain: UPF0301 protein LHK_02881 (186 aa).

This sequence belongs to the UPF0301 (AlgH) family.

The protein is UPF0301 protein LHK_02881 of Laribacter hongkongensis (strain HLHK9).